A 441-amino-acid polypeptide reads, in one-letter code: Eukaryotic translation initiation factor 3 subunit M (441 aa).

Positions 196-365 constitute a PCI domain; the sequence is ESEQAYTYLL…QTFLIHRSTY (170 aa). Residues 405–418 are compositionally biased toward basic and acidic residues; sequence KEEEANKADNKYDS. The tract at residues 405 to 441 is disordered; sequence KEEEANKADNKYDSARGFQRGGQRKQPRALDDDMGLE.

Belongs to the eIF-3 subunit M family. Component of the eukaryotic translation initiation factor 3 (eIF-3) complex.

Its subcellular location is the cytoplasm. Component of the eukaryotic translation initiation factor 3 (eIF-3) complex, which is involved in protein synthesis of a specialized repertoire of mRNAs and, together with other initiation factors, stimulates binding of mRNA and methionyl-tRNAi to the 40S ribosome. The eIF-3 complex specifically targets and initiates translation of a subset of mRNAs involved in cell proliferation. The protein is Eukaryotic translation initiation factor 3 subunit M of Phaeosphaeria nodorum (strain SN15 / ATCC MYA-4574 / FGSC 10173) (Glume blotch fungus).